Consider the following 737-residue polypeptide: O-GlcNAcase BT_4395 (737 aa).

The signal sequence occupies residues 1–21 (MKNNKIYLLGACLLCAVTTFA). The catalytic domain stretch occupies residues 148 to 433 (VRYRGVVEGF…WKDAIRTILP (286 aa)). Residues 149 to 416 (RYRGVVEGFY…SVASYAWNPA (268 aa)) form the GH84 domain. A protein-binding residues include Gly156, Lys187, and Asp263. Asp264 functions as the Proton donor in the catalytic mechanism. A protein contacts are provided by residues Tyr303, 358–360 (WWN), Asp365, and Asn393.

This sequence belongs to the glycosyl hydrolase 84 family. As to quaternary structure, homodimer.

The enzyme catalyses 3-O-(N-acetyl-beta-D-glucosaminyl)-L-seryl-[protein] + H2O = N-acetyl-D-glucosamine + L-seryl-[protein]. It carries out the reaction 3-O-(N-acetyl-beta-D-glucosaminyl)-L-threonyl-[protein] + H2O = L-threonyl-[protein] + N-acetyl-D-glucosamine. Inhibited by 1,2-dideoxy-2'-methyl-alpha-D-glucopyranoso-[2,1-d]-delta 2'-thiazoline (NAG-thiazoline) and O-(2-acetamido-2-deoxy-D-glucopyranosylidene)amino-N-phenyl-carbamate (PUGNAc). Not inhibited by Streptozotocin. Can hydrolyze the glycosidic link of O-GlcNAcylated proteins. Can use p-nitrophenyl-beta-GlcNAc and 4-methylumbelliferone-GlcNAc as substrates (in vitro). This is O-GlcNAcase BT_4395 from Bacteroides thetaiotaomicron (strain ATCC 29148 / DSM 2079 / JCM 5827 / CCUG 10774 / NCTC 10582 / VPI-5482 / E50).